The following is a 201-amino-acid chain: MSRYRGPRFKKIRRLGALPGLTSKRPTPGSDLRNQSRSGKRSQYRIRLEEKQKLRFHYGLTERQLLKYVRIAGKAKGSTGQVLLQLLEMRLDNILFRLGMASTIPGARQLVNHRHILVNGRIVDIPSYRCKPRDIITTRDEQKSRALIQNYLDSSPHEELPKHLTLHSSQYKGLVNQIIDSKWVGLKINELLVVEYYSRQT.

A disordered region spans residues 15-43 (LGALPGLTSKRPTPGSDLRNQSRSGKRSQ). An S4 RNA-binding domain is found at 89–149 (MRLDNILFRL…DEQKSRALIQ (61 aa)).

It belongs to the universal ribosomal protein uS4 family. In terms of assembly, part of the 30S ribosomal subunit. Contacts protein S5. The interaction surface between S4 and S5 is involved in control of translational fidelity.

The protein localises to the plastid. It localises to the chloroplast. Functionally, one of the primary rRNA binding proteins, it binds directly to 16S rRNA where it nucleates assembly of the body of the 30S subunit. In terms of biological role, with S5 and S12 plays an important role in translational accuracy. This chain is Small ribosomal subunit protein uS4c (rps4), found in Nandina domestica (Heavenly bamboo).